The chain runs to 361 residues: Phosphoserine aminotransferase (361 aa).

R43 lines the L-glutamate pocket. Residues 77–78 (AS), W103, T153, D173, and Q196 each bind pyridoxal 5'-phosphate. Residue K197 is modified to N6-(pyridoxal phosphate)lysine. 238 to 239 (NT) contributes to the pyridoxal 5'-phosphate binding site.

This sequence belongs to the class-V pyridoxal-phosphate-dependent aminotransferase family. SerC subfamily. In terms of assembly, homodimer. The cofactor is pyridoxal 5'-phosphate.

It is found in the cytoplasm. The catalysed reaction is O-phospho-L-serine + 2-oxoglutarate = 3-phosphooxypyruvate + L-glutamate. It catalyses the reaction 4-(phosphooxy)-L-threonine + 2-oxoglutarate = (R)-3-hydroxy-2-oxo-4-phosphooxybutanoate + L-glutamate. It participates in amino-acid biosynthesis; L-serine biosynthesis; L-serine from 3-phospho-D-glycerate: step 2/3. Its pathway is cofactor biosynthesis; pyridoxine 5'-phosphate biosynthesis; pyridoxine 5'-phosphate from D-erythrose 4-phosphate: step 3/5. In terms of biological role, catalyzes the reversible conversion of 3-phosphohydroxypyruvate to phosphoserine and of 3-hydroxy-2-oxo-4-phosphonooxybutanoate to phosphohydroxythreonine. This Azotobacter vinelandii (strain DJ / ATCC BAA-1303) protein is Phosphoserine aminotransferase.